The chain runs to 876 residues: Alanine--tRNA ligase (876 aa).

The residue at position 74 (Lys-74) is an N6-acetyllysine. Zn(2+)-binding residues include His-564, His-568, Cys-666, and His-670.

The protein belongs to the class-II aminoacyl-tRNA synthetase family. Homotetramer. Zn(2+) serves as cofactor.

It localises to the cytoplasm. The enzyme catalyses tRNA(Ala) + L-alanine + ATP = L-alanyl-tRNA(Ala) + AMP + diphosphate. Catalyzes the attachment of alanine to tRNA(Ala) in a two-step reaction: alanine is first activated by ATP to form Ala-AMP and then transferred to the acceptor end of tRNA(Ala). Also edits incorrectly charged Ser-tRNA(Ala) and Gly-tRNA(Ala) via its editing domain. The chain is Alanine--tRNA ligase from Escherichia coli O6:K15:H31 (strain 536 / UPEC).